The following is a 259-amino-acid chain: UPF0246 protein PputGB1_4560 (259 aa).

This sequence belongs to the UPF0246 family.

The protein is UPF0246 protein PputGB1_4560 of Pseudomonas putida (strain GB-1).